A 159-amino-acid polypeptide reads, in one-letter code: Probable inactive acireductone dioxygenase 1 (159 aa).

It belongs to the acireductone dioxygenase (ARD) family.

It localises to the cytoplasm. It is found in the nucleus. Functionally, probable inactive acireductone dioxygenase. This is Probable inactive acireductone dioxygenase 1 from Caenorhabditis elegans.